A 96-amino-acid polypeptide reads, in one-letter code: Envelope glycoprotein N (96 aa).

The first 21 residues, 1–21 (MPRSPLIVAVVAAALFAIVRG), serve as a signal peptide directing secretion. The Virion surface portion of the chain corresponds to 22–54 (RDPLLDAMRREGAMDFWSAGCYARGVPLSEPPQ). A helical membrane pass occupies residues 55-75 (ALVVFYVALTAVMVAVALYAY). The Intravirion portion of the chain corresponds to 76–96 (GLCFRLMGASGPNKKESRGRG).

It belongs to the herpesviridae glycoprotein N family. Interacts (via N-terminus) with gM (via N-terminus). The gM-gN heterodimer forms the gCII complex.

It is found in the virion membrane. Its subcellular location is the host membrane. The protein resides in the host Golgi apparatus. The protein localises to the host trans-Golgi network. Its function is as follows. Envelope glycoprotein necessary for proper maturation of gM and modulation of its membrane fusion activity. Also plays a critical role in virion morphogenesis. This is Envelope glycoprotein N from Bos taurus (Bovine).